The chain runs to 71 residues: uncharacterized protein (71 aa).

This is an uncharacterized protein from Haemophilus influenzae (strain ATCC 51907 / DSM 11121 / KW20 / Rd).